Consider the following 192-residue polypeptide: GTP cyclohydrolase-2 (192 aa).

50-54 (RLHSE) provides a ligand contact to GTP. 3 residues coordinate Zn(2+): Cys-55, Cys-66, and Cys-68. GTP is bound by residues 92 to 94 (EGR) and Thr-114. The active-site Proton acceptor is Asp-126. The Nucleophile role is filled by Arg-128. 2 residues coordinate GTP: Thr-149 and Lys-154.

This sequence belongs to the GTP cyclohydrolase II family. Requires Zn(2+) as cofactor.

It carries out the reaction GTP + 4 H2O = 2,5-diamino-6-hydroxy-4-(5-phosphoribosylamino)-pyrimidine + formate + 2 phosphate + 3 H(+). Its pathway is cofactor biosynthesis; riboflavin biosynthesis; 5-amino-6-(D-ribitylamino)uracil from GTP: step 1/4. Functionally, catalyzes the conversion of GTP to 2,5-diamino-6-ribosylamino-4(3H)-pyrimidinone 5'-phosphate (DARP), formate and pyrophosphate. In Helicobacter acinonychis (strain Sheeba), this protein is GTP cyclohydrolase-2.